The chain runs to 382 residues: Queuine tRNA-ribosyltransferase (382 aa).

Asp93 functions as the Proton acceptor in the catalytic mechanism. Residues 93–97 (DSGGF), Asp147, Gln191, and Gly218 contribute to the substrate site. Residues 249–255 (GVGKPED) are RNA binding. Asp268 acts as the Nucleophile in catalysis. An RNA binding; important for wobble base 34 recognition region spans residues 273–277 (TRNAR). Residues Cys306, Cys308, Cys311, and His337 each coordinate Zn(2+).

This sequence belongs to the queuine tRNA-ribosyltransferase family. As to quaternary structure, homodimer. Within each dimer, one monomer is responsible for RNA recognition and catalysis, while the other monomer binds to the replacement base PreQ1. The cofactor is Zn(2+).

It carries out the reaction 7-aminomethyl-7-carbaguanine + guanosine(34) in tRNA = 7-aminomethyl-7-carbaguanosine(34) in tRNA + guanine. It participates in tRNA modification; tRNA-queuosine biosynthesis. In terms of biological role, catalyzes the base-exchange of a guanine (G) residue with the queuine precursor 7-aminomethyl-7-deazaguanine (PreQ1) at position 34 (anticodon wobble position) in tRNAs with GU(N) anticodons (tRNA-Asp, -Asn, -His and -Tyr). Catalysis occurs through a double-displacement mechanism. The nucleophile active site attacks the C1' of nucleotide 34 to detach the guanine base from the RNA, forming a covalent enzyme-RNA intermediate. The proton acceptor active site deprotonates the incoming PreQ1, allowing a nucleophilic attack on the C1' of the ribose to form the product. After dissociation, two additional enzymatic reactions on the tRNA convert PreQ1 to queuine (Q), resulting in the hypermodified nucleoside queuosine (7-(((4,5-cis-dihydroxy-2-cyclopenten-1-yl)amino)methyl)-7-deazaguanosine). The protein is Queuine tRNA-ribosyltransferase of Actinobacillus pleuropneumoniae serotype 3 (strain JL03).